Here is a 25-residue protein sequence, read N- to C-terminus: M-poneritoxin-Nc2a (25 aa).

Belongs to the ponericin-L family. As to expression, expressed by the venom gland.

The protein localises to the secreted. The protein resides in the target cell membrane. Its function is as follows. Membrane-perturbating peptide with multiple activities. It is insecticidal, since it induces reversible paralysis in insects (L.cuprina) after 1 hour, but fails to kill them. It shows moderate antibacterial activity against some Gram-positive and Gram-negative bacteria. It is also antiparasitic, since it moderately inhibits the larval development of the major pathogenic nematode of ruminants (H.contortus, IC(50)=23.2 uM), but fails to reduce the motility of adult males of the other nematode B.malayi. It also shows moderate cytotoxic activity against HEK293 cells (EC(50)=48-57 uM) but does not induce hemolysis in human erythrocytes. It also causes a moderate increase in intracellular calcium concentration on neuronal and epithelial cell lines, which supports a non-specific membrane perturbation mechanism of action. The protein is M-poneritoxin-Nc2a of Neoponera commutata (Large hunting ant).